Reading from the N-terminus, the 386-residue chain is Succinate--CoA ligase [ADP-forming] subunit beta (386 aa).

Residues 9 to 244 form the ATP-grasp domain; that stretch reads KEILKQYGVK…LDEEDEKEIE (236 aa). ATP is bound by residues Lys46, 53-55, Glu99, Cys102, and Glu107; that span reads GRG. Residues Asn199 and Asp213 each contribute to the Mg(2+) site. Residues Asn264 and 321-323 each bind substrate; that span reads GIM.

Belongs to the succinate/malate CoA ligase beta subunit family. Heterotetramer of two alpha and two beta subunits. It depends on Mg(2+) as a cofactor.

It carries out the reaction succinate + ATP + CoA = succinyl-CoA + ADP + phosphate. The enzyme catalyses GTP + succinate + CoA = succinyl-CoA + GDP + phosphate. It participates in carbohydrate metabolism; tricarboxylic acid cycle; succinate from succinyl-CoA (ligase route): step 1/1. In terms of biological role, succinyl-CoA synthetase functions in the citric acid cycle (TCA), coupling the hydrolysis of succinyl-CoA to the synthesis of either ATP or GTP and thus represents the only step of substrate-level phosphorylation in the TCA. The beta subunit provides nucleotide specificity of the enzyme and binds the substrate succinate, while the binding sites for coenzyme A and phosphate are found in the alpha subunit. The sequence is that of Succinate--CoA ligase [ADP-forming] subunit beta from Brevibacillus brevis (strain 47 / JCM 6285 / NBRC 100599).